A 215-amino-acid polypeptide reads, in one-letter code: Probable GTP-binding protein EngB (215 aa).

One can recognise an EngB-type G domain in the interval 31-215; it reads GPPEIAFAGR…RAAILQAIAV (185 aa). Residues 39 to 46, 66 to 70, 93 to 96, 160 to 163, and 194 to 196 each bind GTP; these read GRSNVGKS, GRTQE, DMPG, TKSD, and TSS. S46 and T68 together coordinate Mg(2+).

This sequence belongs to the TRAFAC class TrmE-Era-EngA-EngB-Septin-like GTPase superfamily. EngB GTPase family. The cofactor is Mg(2+).

Necessary for normal cell division and for the maintenance of normal septation. This Bartonella quintana (strain Toulouse) (Rochalimaea quintana) protein is Probable GTP-binding protein EngB.